The chain runs to 469 residues: MMKNRVTNIHFVGIGGVGMSGIAEVLHNLGFKVSGSDQARNAATEHLGSLGIQVYPGHTAEHVNGADVVVTSTAVKKENPEVVAALEQQIPVIPRALMLAELMRFRDGIAIAGTHGKTTTTSLTASILGAAGLDPTFVIGGKLNAAGTNARLGKGEYIVAEADESDASFLHLTPIMSVVTNIDEDHMDTYGHSVEKLHQAFIDFIHRMPFYGKAFLCIDSEHVRAILPKVSKPYATYGLDDTADIYATDIENVGAQMKFTVHVQMKGHEQGSFEVVLNMPGRHNVLNALAAIGVALEVGASVEAIQKGLLGFEGVGRRFQKYGDIKLPNGGTALLVDDYGHHPVEMAATLAAARGAYLEKRLVLAFQPHRYTRTRDLFEDFTKVLNTVDALVLTEVYAAGEEPIAAADSRALARAIRVLGKLEPIYCENVADLPEMLLNVLQDGDIVLNMGAGSINRVPAALLALSKQI.

Residue 113–119 (GTHGKTT) participates in ATP binding.

It belongs to the MurCDEF family.

The protein resides in the cytoplasm. The catalysed reaction is UDP-N-acetyl-alpha-D-muramate + L-alanine + ATP = UDP-N-acetyl-alpha-D-muramoyl-L-alanine + ADP + phosphate + H(+). The protein operates within cell wall biogenesis; peptidoglycan biosynthesis. In terms of biological role, cell wall formation. The protein is UDP-N-acetylmuramate--L-alanine ligase of Neisseria meningitidis serogroup B (strain ATCC BAA-335 / MC58).